Here is a 577-residue protein sequence, read N- to C-terminus: Arginine--tRNA ligase (577 aa).

The 'HIGH' region motif lies at proline 122–histidine 132.

Belongs to the class-I aminoacyl-tRNA synthetase family. Monomer.

The protein localises to the cytoplasm. It catalyses the reaction tRNA(Arg) + L-arginine + ATP = L-arginyl-tRNA(Arg) + AMP + diphosphate. This chain is Arginine--tRNA ligase, found in Salmonella dublin (strain CT_02021853).